Consider the following 212-residue polypeptide: Uracil phosphoribosyltransferase (212 aa).

Residues Arg78, Arg103, and 130-138 (DPMLATGGS) each bind 5-phospho-alpha-D-ribose 1-diphosphate. Residues Ile193 and 198–200 (GDA) contribute to the uracil site. Asp199 serves as a coordination point for 5-phospho-alpha-D-ribose 1-diphosphate.

It belongs to the UPRTase family. Mg(2+) is required as a cofactor.

The catalysed reaction is UMP + diphosphate = 5-phospho-alpha-D-ribose 1-diphosphate + uracil. It functions in the pathway pyrimidine metabolism; UMP biosynthesis via salvage pathway; UMP from uracil: step 1/1. With respect to regulation, allosterically activated by GTP. In terms of biological role, catalyzes the conversion of uracil and 5-phospho-alpha-D-ribose 1-diphosphate (PRPP) to UMP and diphosphate. In Pseudomonas aeruginosa (strain LESB58), this protein is Uracil phosphoribosyltransferase.